The following is a 644-amino-acid chain: Chaperone protein DnaK (644 aa).

A Phosphothreonine; by autocatalysis modification is found at Thr-200. The segment at 603 to 644 (VMAAEQAKSGGAAPGAAPGGAQQAAPDADVVDADFKEVDDKK) is disordered. The segment covering 612–630 (GGAAPGAAPGGAQQAAPDA) has biased composition (low complexity). Residues 635 to 644 (ADFKEVDDKK) show a composition bias toward basic and acidic residues.

It belongs to the heat shock protein 70 family.

Its function is as follows. Acts as a chaperone. This is Chaperone protein DnaK from Polynucleobacter asymbioticus (strain DSM 18221 / CIP 109841 / QLW-P1DMWA-1) (Polynucleobacter necessarius subsp. asymbioticus).